Here is a 230-residue protein sequence, read N- to C-terminus: Phosphoribosylaminoimidazole-succinocarboxamide synthase (230 aa).

Belongs to the SAICAR synthetase family.

The catalysed reaction is 5-amino-1-(5-phospho-D-ribosyl)imidazole-4-carboxylate + L-aspartate + ATP = (2S)-2-[5-amino-1-(5-phospho-beta-D-ribosyl)imidazole-4-carboxamido]succinate + ADP + phosphate + 2 H(+). It functions in the pathway purine metabolism; IMP biosynthesis via de novo pathway; 5-amino-1-(5-phospho-D-ribosyl)imidazole-4-carboxamide from 5-amino-1-(5-phospho-D-ribosyl)imidazole-4-carboxylate: step 1/2. The sequence is that of Phosphoribosylaminoimidazole-succinocarboxamide synthase (purC) from Thermotoga maritima (strain ATCC 43589 / DSM 3109 / JCM 10099 / NBRC 100826 / MSB8).